A 397-amino-acid polypeptide reads, in one-letter code: Flavohemoprotein (397 aa).

The Globin domain occupies 4–140 (SFSPHTITLI…IANLLKDREA (137 aa)). H87 is a binding site for heme b. Catalysis depends on charge relay system residues Y97 and E139. The tract at residues 151–397 (GGWIHWRRFV…FGPMDEEMAA (247 aa)) is reductase. An FAD-binding FR-type domain is found at 154-258 (IHWRRFVISK…TPPVGDFFLP (105 aa)). FAD contacts are provided by residues Y192 and 207-210 (RNYS). 271–276 (GVGLTP) contacts NADP(+). 387 to 390 (FFGP) contributes to the FAD binding site.

This sequence belongs to the globin family. Two-domain flavohemoproteins subfamily. It in the C-terminal section; belongs to the flavoprotein pyridine nucleotide cytochrome reductase family. Requires heme b as cofactor. The cofactor is FAD.

The catalysed reaction is 2 nitric oxide + NADPH + 2 O2 = 2 nitrate + NADP(+) + H(+). It carries out the reaction 2 nitric oxide + NADH + 2 O2 = 2 nitrate + NAD(+) + H(+). Is involved in NO detoxification in an aerobic process, termed nitric oxide dioxygenase (NOD) reaction that utilizes O(2) and NAD(P)H to convert NO to nitrate, which protects the bacterium from various noxious nitrogen compounds. Therefore, plays a central role in the inducible response to nitrosative stress. The chain is Flavohemoprotein from Xylella fastidiosa (strain 9a5c).